The sequence spans 5193 residues: Usherin (5193 aa).

The N-terminal stretch at 1–34 (MHYLALSPGFLCYTIKTLILAYLASVLVLAASQG) is a signal peptide. The Extracellular segment spans residues 35 to 5033 (VFPRLENVGA…KSTEFYSELW (4999 aa)). Residues Asn-230, Asn-258, Asn-274, Asn-358, Asn-415, Asn-448, and Asn-469 are each glycosylated (N-linked (GlcNAc...) asparagine). A Laminin N-terminal domain is found at 268–514 (QDFRLYNVSL…AVDEIIVSGR (247 aa)). Intrachain disulfides connect Cys-515/Cys-524, Cys-517/Cys-533, Cys-535/Cys-546, Cys-549/Cys-569, Cys-572/Cys-581, Cys-574/Cys-602, Cys-605/Cys-614, Cys-617/Cys-635, Cys-638/Cys-652, Cys-640/Cys-659, Cys-661/Cys-670, Cys-673/Cys-688, Cys-691/Cys-705, Cys-693/Cys-712, Cys-714/Cys-723, Cys-726/Cys-741, Cys-744/Cys-756, Cys-746/Cys-763, Cys-765/Cys-774, Cys-777/Cys-789, Cys-792/Cys-805, Cys-794/Cys-812, Cys-814/Cys-823, and Cys-826/Cys-846. 10 Laminin EGF-like domains span residues 515 to 571 (CQCH…NCKP), 572 to 637 (CQCH…ACKL), 638 to 690 (CDCN…GCRP), 691 to 743 (CNCN…GCEP), 744 to 791 (CQCN…ACEV), 792 to 848 (CDCS…NCEK), 853 to 896 (NGSL…GCQA), 897 to 947 (CDCD…GCLP), 948 to 998 (CLCH…RCRP), and 999 to 1049 (CHCH…GCSK). A glycan (N-linked (GlcNAc...) asparagine) is linked at Asn-647. Residues Asn-836 and Asn-853 are each glycosylated (N-linked (GlcNAc...) asparagine). 14 disulfides stabilise this stretch: Cys-867–Cys-876, Cys-879–Cys-894, Cys-897–Cys-910, Cys-899–Cys-917, Cys-919–Cys-928, Cys-931–Cys-945, Cys-948–Cys-960, Cys-950–Cys-967, Cys-969–Cys-979, Cys-982–Cys-996, Cys-999–Cys-1011, Cys-1001–Cys-1018, Cys-1020–Cys-1029, and Cys-1032–Cys-1047. Asn-885 is a glycosylation site (N-linked (GlcNAc...) asparagine). The N-linked (GlcNAc...) asparagine glycan is linked to Asn-941. Asn-1008 is a glycosylation site (N-linked (GlcNAc...) asparagine). 5 consecutive Fibronectin type-III domains span residues 1055–1143 (PPPR…TKPE), 1147–1241 (GHLN…APPQ), 1242–1357 (TQGP…SVPV), 1358–1462 (FMAP…AAPA), and 1463–1566 (QLRP…LQLK). Residues Asn-1068, Asn-1089, Asn-1150, Asn-1171, and Asn-1222 are each glycosylated (N-linked (GlcNAc...) asparagine). N-linked (GlcNAc...) asparagine glycosylation is found at Asn-1382, Asn-1473, and Asn-1626. Laminin G-like domains follow at residues 1511-1700 (TKGT…WEGC) and 1705-1882 (EEGV…QDGC). Residues Cys-1663 and Cys-1700 are joined by a disulfide bond. Asn-1770 carries N-linked (GlcNAc...) asparagine glycosylation. Fibronectin type-III domains follow at residues 1847-1946 (EPGF…TAPQ), 1948-2045 (VPTP…TPQE), 2046-2132 (APQE…TAQL), 2133-2234 (PPEQ…IPEG), 2235-2321 (VPAP…APPE), 2322-2421 (GVVN…SVEM), 2422-2525 (PPGA…DKPG), 2526-2613 (PIDA…TLPG), 2617-2713 (GIPS…TRPC), 2717-2810 (GVQP…THPA), 2811-2914 (PPQE…TLAG), 2918-3009 (RGAT…MWEE), and 3013-3103 (GMLP…TPSD). Residues Cys-1853 and Cys-1882 are joined by a disulfide bond. The N-linked (GlcNAc...) asparagine glycan is linked to Asn-1894. The disordered stretch occupies residues 1931 to 1955 (VSSDWSRGRTLGTAPQSVPTPSRAQ). Residues 1943-1955 (TAPQSVPTPSRAQ) show a composition bias toward polar residues. Asn-1958, Asn-2095, Asn-2121, Asn-2177, Asn-2186, Asn-2249, Asn-2276, Asn-2313, Asn-2368, and Asn-2404 each carry an N-linked (GlcNAc...) asparagine glycan. N-linked (GlcNAc...) asparagine glycosylation is found at Asn-2575, Asn-2647, Asn-2701, Asn-2761, and Asn-2779. N-linked (GlcNAc...) asparagine glycosylation is found at Asn-2928, Asn-2998, Asn-3023, Asn-3090, Asn-3208, Asn-3322, and Asn-3411. 17 Fibronectin type-III domains span residues 3395–3489 (CPAT…TRED), 3490–3580 (VPEG…TTQR), 3581–3671 (SPEN…TLQA), 3672–3766 (APQG…TPED), 3769–3857 (PPCN…TLEA), 3858–3955 (APVG…TLEA), 3956–4059 (PPRG…SAPS), 4060–4148 (GLMN…APPD), 4149–4256 (TQMA…APPD), 4257–4346 (GLSP…TPEV), 4347–4437 (PPSE…APPE), 4438–4522 (NMDP…TSPS), 4523–4625 (APSG…VPPL), 4628–4725 (PAPH…TGPA), 4726–4818 (PPEG…THPA), 4819–4921 (PPSG…TKKE), and 4922–5005 (MPQY…YDAA). Asn-3589, Asn-3645, Asn-3686, Asn-3712, Asn-3723, and Asn-3772 each carry an N-linked (GlcNAc...) asparagine glycan. Residues Asn-3976, Asn-4063, Asn-4194, Asn-4218, Asn-4304, Asn-4340, Asn-4365, and Asn-4410 are each glycosylated (N-linked (GlcNAc...) asparagine). N-linked (GlcNAc...) asparagine glycans are attached at residues Asn-4556, Asn-4575, Asn-4683, Asn-4716, Asn-4746, Asn-4756, Asn-4765, Asn-4915, and Asn-4934. A helical transmembrane segment spans residues 5034-5054 (FIMVMAVVGLILLAIFLSLIL). The Cytoplasmic portion of the chain corresponds to 5055-5193 (QRKIHKEPCI…EHTAFTDTHL (139 aa)). Positions 5191–5193 (THL) match the PDZ-binding motif.

As to quaternary structure, interacts with collagen IV and fibronectin via its laminin EGF-like domains. Interaction with collagen may be required for stable integration into the basement membrane. Interacts with NINL. Interacts with USH1C. Component of USH2 complex, composed of ADGRV1, PDZD7, USH2A and WHRN. Interacts with ADGRV1/MASS1 (via N-terminal PDZ domain). Interacts (via the cytoplasmic region) with WHRN. Interacts (via the cytoplasmic region) with PDZD7. Interacts (via the cytoplasmic region) with VEZT and MYO7A (via MyTH4-FERM domains); the interaction associates VEZT with the USH2 complex at the stereocilia base. Present in the testis, epididymis, oviduct, spleen, submaxillary gland, and small and large intestines. Not detected in the brain, skin, lung, skeletal muscle, cardiac muscle, liver or kidney. Expressed in smooth muscle of the colon and the epididymis. Also present in select vascular basement membranes. In the cochlea, it is present in virtually every basement membrane. It is particularly high in the strial capillary basement membranes (SCBMs). In the retina, it is again expressed in all of the basement membranes. It is also very prevalent in the lens capsule and the Bruch's layer between the retinal pigment epithelium and the choroid layer, which is very rich in basement membranes. In neonates in it is widely expressed in the basement membranes of the cochlea. Present in the synaptic terminals of retinal photoreceptors (at protein level).

The protein resides in the cell projection. It localises to the stereocilium membrane. Its subcellular location is the photoreceptor inner segment. The protein localises to the secreted. Functionally, involved in hearing and vision as member of the USH2 complex. In the inner ear, required for the maintenance of hair bundle ankle formation, which connects growing stereocilia in developing cochlear hair cells. In retina photoreceptors, the USH2 complex is required for the maintenance of periciliary membrane complex that seems to play a role in regulating intracellular protein transport. The protein is Usherin (Ush2A) of Mus musculus (Mouse).